The sequence spans 3387 residues: Genome polyprotein (3387 aa).

Topologically, residues Met-1–Ser-100 are cytoplasmic. Positions Leu-36–Leu-71 are hydrophobic; homodimerization of capsid protein C. A propeptide spans Ser-100–Ala-113 (ER anchor for the capsid protein C, removed in mature form by serine protease NS3). The chain crosses the membrane as a helical span at residues Thr-101–Ser-117. Topologically, residues Thr-118–Glu-237 are extracellular. N-linked (GlcNAc...) asparagine; by host glycosylation occurs at Asn-182. Residues Ser-238 to Gly-258 form a helical membrane-spanning segment. At Gln-259 to Thr-265 the chain is on the cytoplasmic side. Residues Val-266–Gly-279 form a helical membrane-spanning segment. Over Met-280–Thr-725 the chain is Extracellular. Intrachain disulfides connect Cys-282–Cys-309, Cys-339–Cys-400, Cys-353–Cys-384, and Cys-371–Cys-395. Asn-346 carries an N-linked (GlcNAc...) asparagine; by host glycan. The segment at Asp-377–Gly-390 is fusion peptide. An N-linked (GlcNAc...) asparagine; by host glycan is attached at Asn-432. Disulfide bonds link Cys-464/Cys-564 and Cys-581/Cys-612. Residues Met-726–Gly-746 form a helical membrane-spanning segment. The Cytoplasmic portion of the chain corresponds to Thr-747–Ser-753. A helical membrane pass occupies residues Met-754–Ala-774. Residues Asp-775–Met-1194 lie on the Extracellular side of the membrane. 6 disulfides stabilise this stretch: Cys-778–Cys-789, Cys-829–Cys-917, Cys-953–Cys-997, Cys-1054–Cys-1103, Cys-1065–Cys-1087, and Cys-1086–Cys-1090. N-linked (GlcNAc...) asparagine; by host glycosylation is found at Asn-904 and Asn-981. A helical membrane pass occupies residues Gly-1195–Leu-1218. Over Arg-1219–Arg-1224 the chain is Lumenal. A helical membrane pass occupies residues Glu-1225–His-1243. Residues Asp-1244–Asn-1267 are Cytoplasmic-facing. A helical membrane pass occupies residues Thr-1268–Met-1288. Ala-1289 is a topological domain (lumenal). A helical transmembrane segment spans residues Trp-1290–Thr-1308. At Ser-1309–His-1316 the chain is on the lumenal side. Residues Trp-1317–Leu-1337 form a helical membrane-spanning segment. Over Met-1338–Ser-1345 the chain is Cytoplasmic. Residues Trp-1346 to Leu-1366 traverse the membrane as a helical segment. Residues Lys-1367 to Asp-1369 lie on the Lumenal side of the membrane. The chain crosses the membrane as a helical span at residues Val-1370 to Gly-1390. Residues Ser-1391 to Asn-1437 are Cytoplasmic-facing. The interval Leu-1397–Thr-1436 is interacts with and activates NS3 protease. The segment at residues Met-1438 to Ile-1458 is an intramembrane region (helical). Over Pro-1459–Ser-2143 the chain is Cytoplasmic. One can recognise a Peptidase S7 domain in the interval Ser-1475 to Val-1652. Residues His-1525, Asp-1549, and Ser-1609 each act as charge relay system; for serine protease NS3 activity in the active site. The Helicase ATP-binding domain occupies Glu-1654–Glu-1810. Positions Arg-1658 to Arg-1661 are important for RNA-binding. Residue Leu-1667–Thr-1674 participates in ATP binding. A DEAH box motif is present at residues Asp-1758–His-1761. The Helicase C-terminal domain maps to Thr-1820–Arg-1987. Lys-1862 is modified (N6-acetyllysine; by host). Residues Leu-2144–Phe-2164 traverse the membrane as a helical segment. Residues Met-2165 to Gly-2169 are Lumenal-facing. Residues Ile-2170–Ala-2190 constitute an intramembrane region (helical). Glu-2191 is a topological domain (lumenal). The chain crosses the membrane as a helical span at residues Ile-2192–Val-2212. The Cytoplasmic segment spans residues Pro-2213–Gln-2225. The helical transmembrane segment at Leu-2226–Gly-2246 threads the bilayer. Topologically, residues Leu-2247 to Asp-2270 are lumenal. Residues Leu-2271–Leu-2291 constitute an intramembrane region (helical). The Lumenal segment spans residues Arg-2292–Asn-2301. N-linked (GlcNAc...) asparagine; by host glycans are attached at residues Asn-2297 and Asn-2301. Positions Leu-2302 to Pro-2322 form an intramembrane region, helical. The Lumenal segment spans residues Leu-2323–Pro-2343. The chain crosses the membrane as a helical span at residues Thr-2344–Leu-2364. The Cytoplasmic portion of the chain corresponds to Gln-2365–Gln-2409. The chain crosses the membrane as a helical span at residues Val-2410–Cys-2430. The Lumenal segment spans residues Glu-2431–Thr-2455. N-linked (GlcNAc...) asparagine; by host glycosylation is present at Asn-2453. Residues Ile-2456 to Phe-2476 form a helical membrane-spanning segment. Over Ser-2477–Leu-3387 the chain is Cytoplasmic. The region spanning Thr-2489 to Ser-2751 is the mRNA cap 0-1 NS5-type MT domain. Ser-2543 serves as a coordination point for S-adenosyl-L-methionine. Phosphoserine is present on Ser-2543. Catalysis depends on Lys-2548, which acts as the For 2'-O-MTase activity. Residues Val-2564–Leu-2567 carry the SUMO-interacting motif motif. Positions 2573, 2574, 2591, 2592, 2618, and 2619 each coordinate S-adenosyl-L-methionine. Catalysis depends on Asp-2633, which acts as the For 2'-O-MTase activity. Residue Ile-2634 coordinates S-adenosyl-L-methionine. Catalysis depends on for 2'-O-MTase activity residues Lys-2668 and Glu-2704. Residue Tyr-2706 coordinates S-adenosyl-L-methionine. Zn(2+)-binding residues include Glu-2925, His-2929, Cys-2934, and Cys-2937. The RdRp catalytic domain maps to Leu-3016–Leu-3166. Zn(2+) is bound by residues His-3200, Cys-3216, and Cys-3335.

This sequence in the N-terminal section; belongs to the class I-like SAM-binding methyltransferase superfamily. mRNA cap 0-1 NS5-type methyltransferase family. As to quaternary structure, homodimer. Interacts (via N-terminus) with host EXOC1 (via C-terminus); this interaction results in EXOC1 degradation through the proteasome degradation pathway. Forms heterodimers with envelope protein E in the endoplasmic reticulum and Golgi. In terms of assembly, homodimer; in the endoplasmic reticulum and Golgi. Interacts with protein prM. Interacts with non-structural protein 1. As to quaternary structure, homodimer; Homohexamer when secreted. Interacts with envelope protein E. Interacts (via N-terminus) with serine protease NS3. In terms of assembly, forms a heterodimer with serine protease NS3. May form homooligomers. As to quaternary structure, forms a heterodimer with NS2B. Interacts with NS4B. Interacts with unphosphorylated RNA-directed RNA polymerase NS5; this interaction stimulates RNA-directed RNA polymerase NS5 guanylyltransferase activity. Interacts with host SHFL. Interacts with host MAVS; this interaction inhibits the synthesis of IFN-beta. Interacts with host SHFL. Interacts with host AUP1; the interaction occurs in the presence of Dengue virus NS4B and induces lipophagy which facilitates production of virus progeny particles. In terms of assembly, interacts with serine protease NS3. As to quaternary structure, homodimer. Interacts with host STAT2; this interaction inhibits the phosphorylation of the latter, and, when all viral proteins are present (polyprotein), targets STAT2 for degradation. Interacts with serine protease NS3. Interacts with host PAF1 complex; the interaction may prevent the recruitment of the PAF1 complex to interferon-responsive genes, and thus reduces the immune response. Post-translationally, specific enzymatic cleavages in vivo yield mature proteins. Cleavages in the lumen of endoplasmic reticulum are performed by host signal peptidase, whereas cleavages in the cytoplasmic side are performed by serine protease NS3. Signal cleavage at the 2K-4B site requires a prior NS3 protease-mediated cleavage at the 4A-2K site. Cleaved in post-Golgi vesicles by a host furin, releasing the mature small envelope protein M, and peptide pr. This cleavage is incomplete as up to 30% of viral particles still carry uncleaved prM. In terms of processing, N-glycosylated. Post-translationally, N-glycosylated. The excreted form is glycosylated and this is required for efficient secretion of the protein from infected cells. Acetylated by host KAT5. Acetylation modulates NS3 RNA-binding and unwinding activities and plays an important positive role for viral replication. In terms of processing, sumoylation of RNA-directed RNA polymerase NS5 increases NS5 protein stability allowing proper viral RNA replication. Post-translationally, phosphorylated on serines residues. This phosphorylation may trigger NS5 nuclear localization.

The protein localises to the virion. Its subcellular location is the host nucleus. It is found in the host cytoplasm. It localises to the host perinuclear region. The protein resides in the secreted. The protein localises to the virion membrane. Its subcellular location is the host endoplasmic reticulum membrane. It is found in the host mitochondrion. It catalyses the reaction Selective hydrolysis of -Xaa-Xaa-|-Yaa- bonds in which each of the Xaa can be either Arg or Lys and Yaa can be either Ser or Ala.. The catalysed reaction is RNA(n) + a ribonucleoside 5'-triphosphate = RNA(n+1) + diphosphate. It carries out the reaction a ribonucleoside 5'-triphosphate + H2O = a ribonucleoside 5'-diphosphate + phosphate + H(+). The enzyme catalyses ATP + H2O = ADP + phosphate + H(+). It catalyses the reaction a 5'-end (5'-triphosphoguanosine)-ribonucleoside in mRNA + S-adenosyl-L-methionine = a 5'-end (N(7)-methyl 5'-triphosphoguanosine)-ribonucleoside in mRNA + S-adenosyl-L-homocysteine. The catalysed reaction is a 5'-end (N(7)-methyl 5'-triphosphoguanosine)-ribonucleoside in mRNA + S-adenosyl-L-methionine = a 5'-end (N(7)-methyl 5'-triphosphoguanosine)-(2'-O-methyl-ribonucleoside) in mRNA + S-adenosyl-L-homocysteine + H(+). In terms of biological role, plays a role in virus budding by binding to the cell membrane and gathering the viral RNA into a nucleocapsid that forms the core of a mature virus particle. During virus entry, may induce genome penetration into the host cytoplasm after hemifusion induced by the surface proteins. Can migrate to the cell nucleus where it modulates host functions. Overcomes the anti-viral effects of host EXOC1 by sequestering and degrading the latter through the proteasome degradation pathway. Inhibits RNA silencing by interfering with host Dicer. Functionally, prevents premature fusion activity of envelope proteins in trans-Golgi by binding to envelope protein E at pH6.0. After virion release in extracellular space, gets dissociated from E dimers. Its function is as follows. Acts as a chaperone for envelope protein E during intracellular virion assembly by masking and inactivating envelope protein E fusion peptide. prM is the only viral peptide matured by host furin in the trans-Golgi network probably to avoid catastrophic activation of the viral fusion activity in acidic Golgi compartment prior to virion release. prM-E cleavage is inefficient, and many virions are only partially matured. These uncleaved prM would play a role in immune evasion. In terms of biological role, may play a role in virus budding. Exerts cytotoxic effects by activating a mitochondrial apoptotic pathway through M ectodomain. May display a viroporin activity. Binds to host cell surface receptor and mediates fusion between viral and cellular membranes. Envelope protein is synthesized in the endoplasmic reticulum in the form of heterodimer with protein prM. They play a role in virion budding in the ER, and the newly formed immature particle is covered with 60 spikes composed of heterodimer between precursor prM and envelope protein E. The virion is transported to the Golgi apparatus where the low pH causes dissociation of PrM-E heterodimers and formation of E homodimers. prM-E cleavage is inefficient, and many virions are only partially matured. These uncleaved prM would play a role in immune evasion. Functionally, involved in immune evasion, pathogenesis and viral replication. Once cleaved off the polyprotein, is targeted to three destinations: the viral replication cycle, the plasma membrane and the extracellular compartment. Essential for viral replication. Required for formation of the replication complex and recruitment of other non-structural proteins to the ER-derived membrane structures. Excreted as a hexameric lipoparticle that plays a role against host immune response. Antagonizing the complement function. Binds to the host macrophages and dendritic cells. Inhibits signal transduction originating from Toll-like receptor 3 (TLR3). Its function is as follows. Disrupts the host endothelial glycocalyx layer of host pulmonary microvascular endothelial cells, inducing degradation of sialic acid and shedding of heparan sulfate proteoglycans. NS1 induces expression of sialidases, heparanase, and activates cathepsin L, which activates heparanase via enzymatic cleavage. These effects are probably linked to the endothelial hyperpermeability observed in severe dengue disease. In terms of biological role, component of the viral RNA replication complex that functions in virion assembly and antagonizes the host immune response. Required cofactor for the serine protease function of NS3. May have membrane-destabilizing activity and form viroporins. Functionally, displays three enzymatic activities: serine protease, NTPase and RNA helicase. NS3 serine protease, in association with NS2B, performs its autocleavage and cleaves the polyprotein at dibasic sites in the cytoplasm: C-prM, NS2A-NS2B, NS2B-NS3, NS3-NS4A, NS4A-2K and NS4B-NS5. NS3 RNA helicase binds RNA and unwinds dsRNA in the 3' to 5' direction. Its function is as follows. Regulates the ATPase activity of the NS3 helicase activity. NS4A allows NS3 helicase to conserve energy during unwinding. Plays a role in the inhibition of the host innate immune response. Interacts with host MAVS and thereby prevents the interaction between RIGI and MAVS. In turn, IFN-beta production is impaired. Interacts with host AUP1 which mediates induction of lipophagy in host cells and facilitates production of virus progeny particles. In terms of biological role, functions as a signal peptide for NS4B and is required for the interferon antagonism activity of the latter. Induces the formation of ER-derived membrane vesicles where the viral replication takes place. Inhibits interferon (IFN)-induced host STAT1 phosphorylation and nuclear translocation, thereby preventing the establishment of cellular antiviral state by blocking the IFN-alpha/beta pathway. Functionally, replicates the viral (+) and (-) RNA genome, and performs the capping of genomes in the cytoplasm. NS5 methylates viral RNA cap at guanine N-7 and ribose 2'-O positions. Besides its role in RNA genome replication, also prevents the establishment of cellular antiviral state by blocking the interferon-alpha/beta (IFN-alpha/beta) signaling pathway. Inhibits host TYK2 and STAT2 phosphorylation, thereby preventing activation of JAK-STAT signaling pathway. May reduce immune responses by preventing the recruitment of the host PAF1 complex to interferon-responsive genes. In Dengue virus type 4 (strain Thailand/0348/1991) (DENV-4), this protein is Genome polyprotein.